We begin with the raw amino-acid sequence, 432 residues long: Putative transferase At1g60990, chloroplastic (432 aa).

Residues 1 to 57 (MNLLQSCKDMAMMMRIDSVSHITNTALLPCLYNGTVLRRRSLSLRKCGFRERKFQLR) constitute a chloroplast transit peptide.

The protein belongs to the GcvT family. As to expression, expressed in young leaves (at protein level).

The protein localises to the plastid. The protein resides in the chloroplast. In terms of biological role, folate-dependent protein involved in Fe/S cluster biogenesis. Functionally complements an E.coli mutant defective in ygfZ. This is Putative transferase At1g60990, chloroplastic from Arabidopsis thaliana (Mouse-ear cress).